The sequence spans 180 residues: Probable RNA 2'-phosphotransferase (180 aa).

This sequence belongs to the KptA/TPT1 family.

Its function is as follows. Removes the 2'-phosphate from RNA via an intermediate in which the phosphate is ADP-ribosylated by NAD followed by a presumed transesterification to release the RNA and generate ADP-ribose 1''-2''-cyclic phosphate (APPR&gt;P). May function as an ADP-ribosylase. The sequence is that of Probable RNA 2'-phosphotransferase from Thermococcus kodakarensis (strain ATCC BAA-918 / JCM 12380 / KOD1) (Pyrococcus kodakaraensis (strain KOD1)).